Here is a 630-residue protein sequence, read N- to C-terminus: E3 ubiquitin-protein ligase TRIM41 (630 aa).

An RING-type; degenerate zinc finger spans residues 20–61; that stretch reads CAICLDYFTDPVSIGCGHNFCRVCVTQLWGGEDEEDRDELDR. The span at 51–75 shows a compositional bias: acidic residues; it reads EDEEDRDELDREEEEEEVGEEEEVE. Disordered regions lie at residues 51–97 and 148–176; these read EDEE…GDME and EDEDEEEEVLEEDEEEELDPITQLPPPPA. Position 85 is a phosphothreonine (Thr-85). Acidic residues predominate over residues 148-166; it reads EDEDEEEEVLEEDEEEELD. A B box-type zinc finger spans residues 222 to 263; that stretch reads NEQGICPRHQEALKLFCEVDEEAICVVCRESRSHKQHSVVPL. Zn(2+) contacts are provided by Cys-227, His-230, Cys-249, and His-255. Lys-256 is covalently cross-linked (Glycyl lysine isopeptide (Lys-Gly) (interchain with G-Cter in SUMO2)). The stretch at 281-374 forms a coiled coil; the sequence is LRKHLEAVQK…AEAQERSQQG (94 aa). One can recognise a B30.2/SPRY domain in the interval 413-630; that stretch reads LTDAIVRKMS…SKGTRIKLCP (218 aa). Position 447 is a phosphoserine (Ser-447). Residues 503-535 are disordered; sequence ARESTHHKEKVGSGGSSVSSGDASSSRHHHRRR.

The protein belongs to the TRIM/RBCC family. In terms of assembly, interacts with PRKCA. Interacts with NOD2. Interacts with TRIM17; this interaction prevents TRIM41 activity on ZSCAN2. Post-translationally, auto-ubiquitinated.

It is found in the cytoplasm. The protein resides in the nucleus. It carries out the reaction S-ubiquitinyl-[E2 ubiquitin-conjugating enzyme]-L-cysteine + [acceptor protein]-L-lysine = [E2 ubiquitin-conjugating enzyme]-L-cysteine + N(6)-ubiquitinyl-[acceptor protein]-L-lysine.. It participates in protein modification; protein ubiquitination. Its function is as follows. E3 ligase that plays essential roles in innate antiviral response. Directly binds to influenza A virus or vesicular stomatitis virus nucleoproteins and targets them for ubiquitination and proteasomal degradation, thereby limiting viral infections. Activates the innate antiviral response by catalyzing monoubiquitination of CGAS, thereby activating CGAS. Also involved in innate antiviral response by mediating 'Lys-63'-linked polyubiquitylation of BCL10 which in turn hubs NEMO for activation of NF-kappa-B and IRF3 pathways. Catalyzes the ubiquitin-mediated degradation of other substrates including protein kinase C, ZSCAN21 or TOP3B suggesting additional roles besides its function in immune response. The protein is E3 ubiquitin-protein ligase TRIM41 of Mus musculus (Mouse).